A 121-amino-acid polypeptide reads, in one-letter code: Small ribosomal subunit protein uS10 (121 aa).

The interval M1 to K20 is disordered.

Belongs to the universal ribosomal protein uS10 family. Part of the 30S ribosomal subunit.

Its function is as follows. Involved in the binding of tRNA to the ribosomes. The polypeptide is Small ribosomal subunit protein uS10 (Mycoplasmoides gallisepticum (strain R(low / passage 15 / clone 2)) (Mycoplasma gallisepticum)).